A 484-amino-acid polypeptide reads, in one-letter code: tRNA sulfurtransferase (484 aa).

In terms of domain architecture, THUMP spans 63–167 (REMIERLTCT…DQRLYVIHNQ (105 aa)). Residues 185 to 186 (LM), K267, G289, and Q298 contribute to the ATP site. Residues C346 and C457 are joined by a disulfide bond. In terms of domain architecture, Rhodanese spans 405–483 (ALPGQIVIDI…GHANVRVYRP (79 aa)). C457 acts as the Cysteine persulfide intermediate in catalysis.

This sequence belongs to the ThiI family.

Its subcellular location is the cytoplasm. The enzyme catalyses [ThiI sulfur-carrier protein]-S-sulfanyl-L-cysteine + a uridine in tRNA + 2 reduced [2Fe-2S]-[ferredoxin] + ATP + H(+) = [ThiI sulfur-carrier protein]-L-cysteine + a 4-thiouridine in tRNA + 2 oxidized [2Fe-2S]-[ferredoxin] + AMP + diphosphate. The catalysed reaction is [ThiS sulfur-carrier protein]-C-terminal Gly-Gly-AMP + S-sulfanyl-L-cysteinyl-[cysteine desulfurase] + AH2 = [ThiS sulfur-carrier protein]-C-terminal-Gly-aminoethanethioate + L-cysteinyl-[cysteine desulfurase] + A + AMP + 2 H(+). It participates in cofactor biosynthesis; thiamine diphosphate biosynthesis. Functionally, catalyzes the ATP-dependent transfer of a sulfur to tRNA to produce 4-thiouridine in position 8 of tRNAs, which functions as a near-UV photosensor. Also catalyzes the transfer of sulfur to the sulfur carrier protein ThiS, forming ThiS-thiocarboxylate. This is a step in the synthesis of thiazole, in the thiamine biosynthesis pathway. The sulfur is donated as persulfide by IscS. In Pseudomonas putida (strain ATCC 47054 / DSM 6125 / CFBP 8728 / NCIMB 11950 / KT2440), this protein is tRNA sulfurtransferase.